The chain runs to 93 residues: N-myc protein (93 aa).

Efficient DNA binding requires dimerization with another bHLH protein. Binds DNA as a heterodimer with MAX. Barely detectable in most tissues assayed.

The protein resides in the nucleus. May function as a transcription factor. The sequence is that of N-myc protein (mycn) from Danio rerio (Zebrafish).